Here is a 301-residue protein sequence, read N- to C-terminus: N-acetylmuramic acid 6-phosphate etherase (301 aa).

The 164-residue stretch at 59 to 222 (TSEALMHGGR…STSVMVKLGK (164 aa)) folds into the SIS domain. Glu87 acts as the Proton donor in catalysis. Glu118 is a catalytic residue.

Belongs to the GCKR-like family. MurNAc-6-P etherase subfamily. In terms of assembly, homodimer.

The enzyme catalyses N-acetyl-D-muramate 6-phosphate + H2O = N-acetyl-D-glucosamine 6-phosphate + (R)-lactate. The protein operates within amino-sugar metabolism; N-acetylmuramate degradation. Specifically catalyzes the cleavage of the D-lactyl ether substituent of MurNAc 6-phosphate, producing GlcNAc 6-phosphate and D-lactate. The polypeptide is N-acetylmuramic acid 6-phosphate etherase (Picosynechococcus sp. (strain ATCC 27264 / PCC 7002 / PR-6) (Agmenellum quadruplicatum)).